The primary structure comprises 179 residues: Large ribosomal subunit protein uL6 (179 aa).

This sequence belongs to the universal ribosomal protein uL6 family. As to quaternary structure, part of the 50S ribosomal subunit.

Its function is as follows. This protein binds to the 23S rRNA, and is important in its secondary structure. It is located near the subunit interface in the base of the L7/L12 stalk, and near the tRNA binding site of the peptidyltransferase center. This Geobacter metallireducens (strain ATCC 53774 / DSM 7210 / GS-15) protein is Large ribosomal subunit protein uL6.